Consider the following 731-residue polypeptide: 1,4-alpha-glucan branching enzyme GlgB (731 aa).

D411 (nucleophile) is an active-site residue. The active-site Proton donor is E464.

This sequence belongs to the glycosyl hydrolase 13 family. GlgB subfamily. In terms of assembly, monomer.

The enzyme catalyses Transfers a segment of a (1-&gt;4)-alpha-D-glucan chain to a primary hydroxy group in a similar glucan chain.. It functions in the pathway glycan biosynthesis; glycogen biosynthesis. Catalyzes the formation of the alpha-1,6-glucosidic linkages in glycogen by scission of a 1,4-alpha-linked oligosaccharide from growing alpha-1,4-glucan chains and the subsequent attachment of the oligosaccharide to the alpha-1,6 position. This is 1,4-alpha-glucan branching enzyme GlgB from Mycobacterium ulcerans (strain Agy99).